The primary structure comprises 510 residues: Bifunctional purine biosynthesis protein PurH (510 aa).

Residues 1–143 enclose the MGS-like domain; sequence MTKRALISVS…KNHDAVLVLV (143 aa).

The protein belongs to the PurH family.

It catalyses the reaction (6R)-10-formyltetrahydrofolate + 5-amino-1-(5-phospho-beta-D-ribosyl)imidazole-4-carboxamide = 5-formamido-1-(5-phospho-D-ribosyl)imidazole-4-carboxamide + (6S)-5,6,7,8-tetrahydrofolate. The enzyme catalyses IMP + H2O = 5-formamido-1-(5-phospho-D-ribosyl)imidazole-4-carboxamide. The protein operates within purine metabolism; IMP biosynthesis via de novo pathway; 5-formamido-1-(5-phospho-D-ribosyl)imidazole-4-carboxamide from 5-amino-1-(5-phospho-D-ribosyl)imidazole-4-carboxamide (10-formyl THF route): step 1/1. It functions in the pathway purine metabolism; IMP biosynthesis via de novo pathway; IMP from 5-formamido-1-(5-phospho-D-ribosyl)imidazole-4-carboxamide: step 1/1. In Deinococcus radiodurans (strain ATCC 13939 / DSM 20539 / JCM 16871 / CCUG 27074 / LMG 4051 / NBRC 15346 / NCIMB 9279 / VKM B-1422 / R1), this protein is Bifunctional purine biosynthesis protein PurH.